The primary structure comprises 184 residues: Orotate phosphoribosyltransferase (184 aa).

Residues arginine 99, lysine 100, lysine 103, histidine 105, and 125 to 133 each bind 5-phospho-alpha-D-ribose 1-diphosphate; that span reads EDTTTTGNS. Threonine 129 and arginine 157 together coordinate orotate.

It belongs to the purine/pyrimidine phosphoribosyltransferase family. PyrE subfamily. As to quaternary structure, homodimer. Mg(2+) serves as cofactor.

The catalysed reaction is orotidine 5'-phosphate + diphosphate = orotate + 5-phospho-alpha-D-ribose 1-diphosphate. It functions in the pathway pyrimidine metabolism; UMP biosynthesis via de novo pathway; UMP from orotate: step 1/2. In terms of biological role, catalyzes the transfer of a ribosyl phosphate group from 5-phosphoribose 1-diphosphate to orotate, leading to the formation of orotidine monophosphate (OMP). The protein is Orotate phosphoribosyltransferase of Corynebacterium glutamicum (strain R).